The primary structure comprises 179 residues: Acireductone dioxygenase (179 aa).

Residues histidine 97, histidine 99, glutamate 103, and histidine 141 each coordinate Fe(2+). Ni(2+) contacts are provided by histidine 97, histidine 99, glutamate 103, and histidine 141.

This sequence belongs to the acireductone dioxygenase (ARD) family. In terms of assembly, monomer. It depends on Fe(2+) as a cofactor. Ni(2+) is required as a cofactor.

It catalyses the reaction 1,2-dihydroxy-5-(methylsulfanyl)pent-1-en-3-one + O2 = 3-(methylsulfanyl)propanoate + CO + formate + 2 H(+). The catalysed reaction is 1,2-dihydroxy-5-(methylsulfanyl)pent-1-en-3-one + O2 = 4-methylsulfanyl-2-oxobutanoate + formate + 2 H(+). It participates in amino-acid biosynthesis; L-methionine biosynthesis via salvage pathway; L-methionine from S-methyl-5-thio-alpha-D-ribose 1-phosphate: step 5/6. Functionally, catalyzes 2 different reactions between oxygen and the acireductone 1,2-dihydroxy-3-keto-5-methylthiopentene (DHK-MTPene) depending upon the metal bound in the active site. Fe-containing acireductone dioxygenase (Fe-ARD) produces formate and 2-keto-4-methylthiobutyrate (KMTB), the alpha-ketoacid precursor of methionine in the methionine recycle pathway. Ni-containing acireductone dioxygenase (Ni-ARD) produces methylthiopropionate, carbon monoxide and formate, and does not lie on the methionine recycle pathway. The sequence is that of Acireductone dioxygenase from Granulibacter bethesdensis (strain ATCC BAA-1260 / CGDNIH1).